The following is a 793-amino-acid chain: MVVAKIEKTGTLSTEQLQKMHAYWRAANYLSVGQIYLMDNPLLREPLKLEHVKPRLLGHWGTTPGLNFIYVHLNRVIQDEDLDMIYIAGPGHGGPGLVANTYLEGTYSEYYPNISEDAEGMKRLFKQFSFPGGIPSHVAPETPGSIHEGGELGYAVSHAYGAVFDNPDLIVACVVGDGEAETGPLATSWHSNKFLNPVRDGAVLPILHLNGYKIANPTVLARISHEELEKLFEGYGYKPYFVEGSEYEPTHQLMAATLDTCIAEIKAIQHEARTGGATARPRWPMIVLRTPKGWTGPKEVDGKKTEDFWRSHQVPFSEMAGKPEHVQLLETWMRSYQPEELFDENGTFLGELKALAPKGHRRMGDNPHANGGILLKDLKMPDFRSYAVDVAKPGTTFAEATKVMGIFLRDVMKANLDQRNFRIVGPDETASNRWGPLFEITNRTWMDAIHPYDDHLSQDGRVMEILSEHTCQGWLEGYLLTGRHGFFSCYEAFIHLVDSMFNQHAKWLKTTRHIPWRRPIASLNYLLTSHVWRQDHNGFSHQDPGFIDHVVNKRAEVIRVYLPPDANTLLSVTDHCLRSRHYVNVVVAGKQPALQYLDMDAAIKHCTKGIGIWDWASNDQGVEPDVVMACCGDIPTLETLAAVDILRQNFPDLKIRVINVVNLMKLQPESEHPHGLSDKDFDSIFTPDKPVVFAFHGYPWLIHRLTYRRNNHNNIHVRGYKEEGTTTTPFDMVVMNDLDRFNLADDVIDRVPRLRYTAAHVKQMLHDKLIEHKQYIHEHGDDMPEIRDWCWPY.

It belongs to the XFP family. Thiamine diphosphate is required as a cofactor.

The chain is Probable phosphoketolase from Gloeobacter violaceus (strain ATCC 29082 / PCC 7421).